Here is a 338-residue protein sequence, read N- to C-terminus: Large ribosomal subunit protein uL3 (338 aa).

The tract at residues 230-258 is disordered; sequence HRKGHRRTGTIGPQAPAVMFTQPRPGQMG.

It belongs to the universal ribosomal protein uL3 family. In terms of assembly, part of the 50S ribosomal subunit. Forms a cluster with proteins L14 and L24e.

In terms of biological role, one of the primary rRNA binding proteins, it binds directly near the 3'-end of the 23S rRNA, where it nucleates assembly of the 50S subunit. This chain is Large ribosomal subunit protein uL3, found in Pyrobaculum aerophilum (strain ATCC 51768 / DSM 7523 / JCM 9630 / CIP 104966 / NBRC 100827 / IM2).